Here is a 22-residue protein sequence, read N- to C-terminus: Sex pheromone inhibitor determinant (22 aa).

A propeptide spanning residues 1–14 is cleaved from the precursor; sequence MSKRAMKKIIPLIT.

The protein resides in the secreted. In terms of biological role, acts as a competitive inhibitor of the CAD1 pheromone. In Enterococcus faecalis (strain ATCC 700802 / V583), this protein is Sex pheromone inhibitor determinant (iad).